The sequence spans 132 residues: MSMSDPLGDMLTRIRNALGRKKDKVVTPASKLRAHVLDVLQSEGYIRGYNQVDLGDGKAELEIELKYFEGMAAIRDISRVSKPGRRVYVSAKSLPQVANGLGISVLSTPKGVMADHEAREQNVGGELLCRVF.

Belongs to the universal ribosomal protein uS8 family. Part of the 30S ribosomal subunit. Contacts proteins S5 and S12.

In terms of biological role, one of the primary rRNA binding proteins, it binds directly to 16S rRNA central domain where it helps coordinate assembly of the platform of the 30S subunit. In Bartonella tribocorum (strain CIP 105476 / IBS 506), this protein is Small ribosomal subunit protein uS8.